Reading from the N-terminus, the 350-residue chain is Ion-translocating oxidoreductase complex subunit D (350 aa).

A run of 5 helical transmembrane segments spans residues Val20–Gly40, Leu44–Ile64, Pro68–Ser88, Ile89–Val109, and Met125–Val145. Thr187 bears the FMN phosphoryl threonine mark. A run of 5 helical transmembrane segments spans residues Ser215–Phe235, Trp241–Tyr261, Ala267–Ser287, Ile300–Pro320, and Ala322–Gln342.

This sequence belongs to the NqrB/RnfD family. In terms of assembly, the complex is composed of six subunits: RnfA, RnfB, RnfC, RnfD, RnfE and RnfG. The cofactor is FMN.

It is found in the cell inner membrane. In terms of biological role, part of a membrane-bound complex that couples electron transfer with translocation of ions across the membrane. The sequence is that of Ion-translocating oxidoreductase complex subunit D from Psychromonas ingrahamii (strain DSM 17664 / CCUG 51855 / 37).